The following is a 335-amino-acid chain: Rho guanine nucleotide exchange factor 39 (335 aa).

The 176-residue stretch at 22–197 folds into the DH domain; sequence KRACTARELL…SETAQRVHTI (176 aa). In terms of domain architecture, PH spans 227 to 331; it reads WFLRQGWLLV…WYHSLTWAIS (105 aa).

As to expression, strongly expressed in hepatocellular carcinoma (HCC) compared with their non-cancerous counterparts.

The protein localises to the cell membrane. Promotes cell proliferation. The chain is Rho guanine nucleotide exchange factor 39 (ARHGEF39) from Homo sapiens (Human).